The chain runs to 154 residues: Toxin YhaV (154 aa).

In terms of assembly, homohexamer; forms a complex with PrlF (SohA) with stoichiometry PrlF(2)-YhaV(4), possibly as a YhaV(2)-PrlF(2)-YhaV(2) complex like the MazFE complex. May dimerize in solution.

Toxic component of a type II toxin-antitoxin (TA) system. Has RNase activity in vitro. Acts as a transcription factor. The YhaV/PrlF complex binds the prlF-yhaV operon, probably negatively regulating its expression. The protein is Toxin YhaV (yhaV) of Escherichia coli O6:H1 (strain CFT073 / ATCC 700928 / UPEC).